Here is a 302-residue protein sequence, read N- to C-terminus: Large ribosomal subunit protein uL29m (302 aa).

This sequence belongs to the universal ribosomal protein uL29 family. In terms of assembly, component of the mitochondrial large ribosomal subunit. Mature mitochondrial ribosomes consist of a small (37S) and a large (54S) subunit. The 37S subunit contains at least 33 different proteins and 1 molecule of RNA (15S). The 54S subunit contains at least 45 different proteins and 1 molecule of RNA (21S).

It is found in the mitochondrion. The chain is Large ribosomal subunit protein uL29m (MRPL4) from Debaryomyces hansenii (strain ATCC 36239 / CBS 767 / BCRC 21394 / JCM 1990 / NBRC 0083 / IGC 2968) (Yeast).